A 228-amino-acid chain; its full sequence is Large ribosomal subunit protein bL25 (228 aa).

Over residues 1–10 the composition is skewed to polar residues; that stretch reads MNSLDANTRN. Disordered regions lie at residues 1–20 and 187–228; these read MNSL…VRSL and MKEP…EEKK. Residues 202–228 are compositionally biased toward basic and acidic residues; it reads EDGKEAAPAAEGDKKDDGEKKATEEKK.

This sequence belongs to the bacterial ribosomal protein bL25 family. CTC subfamily. In terms of assembly, part of the 50S ribosomal subunit; part of the 5S rRNA/L5/L18/L25 subcomplex. Contacts the 5S rRNA. Binds to the 5S rRNA independently of L5 and L18.

Functionally, this is one of the proteins that binds to the 5S RNA in the ribosome where it forms part of the central protuberance. The polypeptide is Large ribosomal subunit protein bL25 (Pelagibacter ubique (strain HTCC1062)).